The following is a 130-amino-acid chain: SDVPVHHRTDHDRASLLTGSSRKSSVDSAGGSLFEASSRASSPSSSSSSECSDTESHDIHSLCSEDDCQEVLRQILQHDQPVHISIKLHVTEDQSTNWMSILNPNNNILYVAFPTDFAPAGSKETFTSLL.

Residues 1-14 are compositionally biased toward basic and acidic residues; the sequence is SDVPVHHRTDHDRA. The interval 1–56 is disordered; the sequence is SDVPVHHRTDHDRASLLTGSSRKSSVDSAGGSLFEASSRASSPSSSSSSECSDTES. Positions 17–27 are enriched in polar residues; that stretch reads LTGSSRKSSVD. Over residues 32-51 the composition is skewed to low complexity; that stretch reads SLFEASSRASSPSSSSSSEC.

The protein belongs to the ODC antizyme family. Interacts with ODC1 and thereby sterically blocks ODC homodimerization.

Functionally, ornithine decarboxylase (ODC) antizyme protein that negatively regulates ODC activity and intracellular polyamine biosynthesis and uptake in response to increased intracellular polyamine levels. Binds to ODC monomers, inhibiting the assembly of the functional ODC homodimer, and targets the monomers for ubiquitin-independent proteolytic destruction by the 26S proteasome. The polypeptide is Ornithine decarboxylase antizyme (Oda) (Drosophila virilis (Fruit fly)).